Consider the following 268-residue polypeptide: Undecaprenyl-diphosphatase (268 aa).

A run of 7 helical transmembrane segments spans residues 43-63, 83-103, 109-129, 144-164, 184-204, 218-238, and 246-266; these read FWNT…VVIY, FVIG…IAGK, LFNP…LMWV, FPLP…IPGV, AAEF…AYDF, IVAI…KAFL, and FTFF…ALAL.

The protein belongs to the UppP family.

It is found in the cell inner membrane. It catalyses the reaction di-trans,octa-cis-undecaprenyl diphosphate + H2O = di-trans,octa-cis-undecaprenyl phosphate + phosphate + H(+). In terms of biological role, catalyzes the dephosphorylation of undecaprenyl diphosphate (UPP). Confers resistance to bacitracin. The polypeptide is Undecaprenyl-diphosphatase (Nitrobacter hamburgensis (strain DSM 10229 / NCIMB 13809 / X14)).